The following is a 314-amino-acid chain: MSNQLPVINLMGPTASGKTALACELYERGNFELISVDSALVYKDMDIGTAKPTREEQELYPHHLIDIITPLEVYSAAQFVEDACALIDEMHSRGKTPILVGGTMLYFKALLEGLSSNLPSADANVRAAIEEKAANEGWQAVYDELVAVDPAAGVKFKVSDKQRIIRALEVYHITGQPITKLQAEQPKNVPYRYTFHNYALLPDRVELHQRIEQRLSKMWDIGFLSEVESLIEKYDLDENLPSMRSVGYRQALEFLLKSDMSLKKKQEMEDKALFATRQLAKRQYTWLRSLQEIHDFKTYLTIKQAKEDLRNSYG.

12–19 (GPTASGKT) is an ATP binding site. 14 to 19 (TASGKT) provides a ligand contact to substrate. Interaction with substrate tRNA stretches follow at residues 37-40 (DSAL) and 162-166 (QRIIR).

It belongs to the IPP transferase family. In terms of assembly, monomer. It depends on Mg(2+) as a cofactor.

It catalyses the reaction adenosine(37) in tRNA + dimethylallyl diphosphate = N(6)-dimethylallyladenosine(37) in tRNA + diphosphate. Its function is as follows. Catalyzes the transfer of a dimethylallyl group onto the adenine at position 37 in tRNAs that read codons beginning with uridine, leading to the formation of N6-(dimethylallyl)adenosine (i(6)A). The protein is tRNA dimethylallyltransferase of Acinetobacter baumannii (strain SDF).